Reading from the N-terminus, the 269-residue chain is MQPQIILITGASSGFGKITAQMLSEQGHIVYGTSRKPSENIGKVRMLVVDVTNSISVRQAVEQIISEQGRMDVLINNAGMGIGGALELATEEEVSMQMNTNFFGVVNMCKAVLPYMRKARRGKIINISSIGGVMGIPYQGFYSASKFAVEGYSEALALEVHPFHIKVCLVQPGDFNTGFTDNRNISELTGQNEDYADSFLRSLKIIEKEERNGCHPRKLGAAICKIVARKNPPFRTKVGPLVQVLFAKSKSWLPDNMMQYALRIFYAIR.

NADPH is bound by residues G10, S12, S13, G14, K36, and D50. The short motif at 10-14 is the GXSXG element; it reads GASSG. Residue S12 is the Nucleophile; for lipase activity of the active site. Catalysis depends on S128, which acts as the Proton donor. The Proton acceptor role is filled by Y142. Positions 142 and 146 each coordinate NADP(+). Residues 142–146 and 175–177 contribute to the NADPH site; these read YSASK and FNT. The active site involves K146. The Lowers pKa of active site Tyr role is filled by K146.

The protein belongs to the short-chain dehydrogenases/reductases (SDR) family.

It catalyses the reaction sphinganine + NADP(+) = 3-oxosphinganine + NADPH + H(+). The protein operates within lipid metabolism; sphingolipid metabolism. Catalyzes the reduction of 3'-oxosphinganine (3-ketodihydrosphingosine/KDS) to sphinganine (dihydrosphingosine/DHS), the second step of de novo sphingolipid biosynthesis. This Bacteroides thetaiotaomicron (strain ATCC 29148 / DSM 2079 / JCM 5827 / CCUG 10774 / NCTC 10582 / VPI-5482 / E50) protein is 3-ketodihydrosphingosine reductase.